We begin with the raw amino-acid sequence, 497 residues long: Cysteine--tRNA ligase (497 aa).

Cysteine 34 contributes to the Zn(2+) binding site. Positions 36-46 match the 'HIGH' region motif; the sequence is PTVYDFAHIGN. Residues cysteine 243, histidine 268, and glutamate 272 each contribute to the Zn(2+) site. The 'KMSKS' region signature appears at 301 to 305; it reads KMAKS. Lysine 304 lines the ATP pocket. Positions 478–497 are disordered; sequence LMDYKDPETGERRTKWEVKR. Residues 480–497 are compositionally biased toward basic and acidic residues; the sequence is DYKDPETGERRTKWEVKR.

Belongs to the class-I aminoacyl-tRNA synthetase family. As to quaternary structure, monomer. Requires Zn(2+) as cofactor.

It localises to the cytoplasm. The enzyme catalyses tRNA(Cys) + L-cysteine + ATP = L-cysteinyl-tRNA(Cys) + AMP + diphosphate. The protein is Cysteine--tRNA ligase of Chelativorans sp. (strain BNC1).